A 140-amino-acid polypeptide reads, in one-letter code: 3-hydroxyacyl-[acyl-carrier-protein] dehydratase FabZ (140 aa).

His47 is a catalytic residue.

This sequence belongs to the thioester dehydratase family. FabZ subfamily.

The protein localises to the cytoplasm. It catalyses the reaction a (3R)-hydroxyacyl-[ACP] = a (2E)-enoyl-[ACP] + H2O. In terms of biological role, involved in unsaturated fatty acids biosynthesis. Catalyzes the dehydration of short chain beta-hydroxyacyl-ACPs and long chain saturated and unsaturated beta-hydroxyacyl-ACPs. The sequence is that of 3-hydroxyacyl-[acyl-carrier-protein] dehydratase FabZ from Streptococcus pneumoniae serotype 4 (strain ATCC BAA-334 / TIGR4).